The following is a 264-amino-acid chain: tRNA pseudouridine synthase A (264 aa).

The active-site Nucleophile is Asp-51. Substrate is bound at residue Tyr-109.

Belongs to the tRNA pseudouridine synthase TruA family. Homodimer.

The catalysed reaction is uridine(38/39/40) in tRNA = pseudouridine(38/39/40) in tRNA. In terms of biological role, formation of pseudouridine at positions 38, 39 and 40 in the anticodon stem and loop of transfer RNAs. This Vibrio campbellii (strain ATCC BAA-1116) protein is tRNA pseudouridine synthase A.